Consider the following 106-residue polypeptide: Prothymosin alpha-B (106 aa).

Positions 1 to 39 (MADAKVDSATEISAKDLKEKKLIEEKENGKDATNGKENE) are enriched in basic and acidic residues. Positions 1-106 (MADAKVDSAT…DVDPKKQKVN (106 aa)) are disordered. Serine 8 carries the post-translational modification Phosphoserine. At threonine 10 the chain carries Phosphothreonine. Acidic residues-rich tracts occupy residues 40 to 76 (ENGE…DEDL) and 85 to 98 (DDDE…EDDV).

The protein belongs to the pro/parathymosin family. In terms of tissue distribution, uniformly expressed in all embryonic cells at 4 and 8 hpf. At the 20-somite stage (18 hpf), ubiquitously expressed in the developing nervous system, in the tail bud and in the pronephric ducts. Also expressed in some placodes, including the anterior lateral line placode, otic vesicle and olfactory placode. At 27 hpf, strong expression persists in the central nervous system and the olfactory placode. Expressed strongly in the eyes and the pectoral fin buds. In the tail region, expressed in the spinal cord, in the posterior lateral line precursors, and persists in the pronephric ducts. At 48 hpf, expressed in all head territories including the developing brain, eyes, and pharyngeal arches. More caudally, expression persists in the pectoral fin buds, the spinal cord and, for the first time, appears in the intestine. At 72 hpf, expressed only in restricted regions of the brain, in pharyngeal arches region and in the amacrine cells and the horizontal cells of the retina.

Its subcellular location is the nucleus. The protein is Prothymosin alpha-B of Danio rerio (Zebrafish).